The chain runs to 354 residues: Vanillate O-demethylase oxygenase subunit (354 aa).

In terms of domain architecture, Rieske spans 7 to 107 (WYVACTPDEI…VEERYGFIWV (101 aa)). 4 residues coordinate [2Fe-2S] cluster: Cys-47, His-49, Cys-66, and His-69.

It belongs to the bacterial ring-hydroxylating dioxygenase alpha subunit family. In terms of assembly, this demethylase system consists of two proteins: an oxygenase and an oxygenase reductase. It depends on [2Fe-2S] cluster as a cofactor. Fe cation is required as a cofactor.

The enzyme catalyses vanillate + NADH + O2 + H(+) = 3,4-dihydroxybenzoate + formaldehyde + NAD(+) + H2O. It functions in the pathway xenobiotic degradation; vanillyl-alcohol degradation. The polypeptide is Vanillate O-demethylase oxygenase subunit (vanA) (Pseudomonas sp. (strain HR199 / DSM 7063)).